A 434-amino-acid polypeptide reads, in one-letter code: Serine--tRNA ligase (434 aa).

239 to 241 provides a ligand contact to L-serine; that stretch reads TAE. Residue 270–272 participates in ATP binding; the sequence is RSE. L-serine is bound at residue glutamate 293. 357–360 provides a ligand contact to ATP; that stretch reads EISS. Serine 392 provides a ligand contact to L-serine.

It belongs to the class-II aminoacyl-tRNA synthetase family. Type-1 seryl-tRNA synthetase subfamily. As to quaternary structure, homodimer. The tRNA molecule binds across the dimer.

The protein resides in the cytoplasm. The catalysed reaction is tRNA(Ser) + L-serine + ATP = L-seryl-tRNA(Ser) + AMP + diphosphate + H(+). It carries out the reaction tRNA(Sec) + L-serine + ATP = L-seryl-tRNA(Sec) + AMP + diphosphate + H(+). Its pathway is aminoacyl-tRNA biosynthesis; selenocysteinyl-tRNA(Sec) biosynthesis; L-seryl-tRNA(Sec) from L-serine and tRNA(Sec): step 1/1. Its function is as follows. Catalyzes the attachment of serine to tRNA(Ser). Is also able to aminoacylate tRNA(Sec) with serine, to form the misacylated tRNA L-seryl-tRNA(Sec), which will be further converted into selenocysteinyl-tRNA(Sec). The polypeptide is Serine--tRNA ligase (Cupriavidus taiwanensis (strain DSM 17343 / BCRC 17206 / CCUG 44338 / CIP 107171 / LMG 19424 / R1) (Ralstonia taiwanensis (strain LMG 19424))).